The sequence spans 353 residues: Melanin-concentrating hormone receptor 1 (353 aa).

The interval M1–S29 is disordered. At M1–P44 the chain is on the extracellular side. Residues P12 to S29 show a composition bias toward polar residues. N-linked (GlcNAc...) asparagine glycosylation is found at N13, N16, and N23. A helical membrane pass occupies residues S45–K67. Residues K68 to D79 are Cytoplasmic-facing. A helical transmembrane segment spans residues I80–Q102. Over L103 to C116 the chain is Extracellular. C116 and C194 form a disulfide bridge. A helical transmembrane segment spans residues T117–I139. The Cytoplasmic segment spans residues D140–S158. The chain crosses the membrane as a helical span at residues V159–Y181. Over A182 to T209 the chain is Extracellular. Residues L210 to L232 traverse the membrane as a helical segment. Residues Q233–K252 lie on the Cytoplasmic side of the membrane. The helical transmembrane segment at R253 to L275 threads the bilayer. Over Q276 to F289 the chain is Extracellular. A helical transmembrane segment spans residues V290–I312. Residues V313–T353 are Cytoplasmic-facing.

The protein belongs to the G-protein coupled receptor 1 family. In terms of assembly, interacts with NCDN. Highest level in brain, particularly in the frontal cortex and hypothalamus, lower levels in the liver and heart.

The protein localises to the cell membrane. Functionally, receptor for melanin-concentrating hormone, coupled to both G proteins that inhibit adenylyl cyclase and G proteins that activate phosphoinositide hydrolysis. The protein is Melanin-concentrating hormone receptor 1 of Homo sapiens (Human).